We begin with the raw amino-acid sequence, 151 residues long: UPF0179 protein MJ1627 (151 aa).

The protein belongs to the UPF0179 family.

This chain is UPF0179 protein MJ1627, found in Methanocaldococcus jannaschii (strain ATCC 43067 / DSM 2661 / JAL-1 / JCM 10045 / NBRC 100440) (Methanococcus jannaschii).